Consider the following 272-residue polypeptide: Dermonecrotic toxin StSicTox-betaIF1 (272 aa).

The active site involves H5. Mg(2+)-binding residues include E25 and D27. H41 functions as the Nucleophile in the catalytic mechanism. 2 disulfides stabilise this stretch: C45–C51 and C47–C189. D85 contacts Mg(2+).

This sequence belongs to the arthropod phospholipase D family. Class II subfamily. Requires Mg(2+) as cofactor. In terms of tissue distribution, expressed by the venom gland.

It localises to the secreted. The enzyme catalyses an N-(acyl)-sphingosylphosphocholine = an N-(acyl)-sphingosyl-1,3-cyclic phosphate + choline. The catalysed reaction is an N-(acyl)-sphingosylphosphoethanolamine = an N-(acyl)-sphingosyl-1,3-cyclic phosphate + ethanolamine. It carries out the reaction a 1-acyl-sn-glycero-3-phosphocholine = a 1-acyl-sn-glycero-2,3-cyclic phosphate + choline. It catalyses the reaction a 1-acyl-sn-glycero-3-phosphoethanolamine = a 1-acyl-sn-glycero-2,3-cyclic phosphate + ethanolamine. Functionally, dermonecrotic toxins cleave the phosphodiester linkage between the phosphate and headgroup of certain phospholipids (sphingolipid and lysolipid substrates), forming an alcohol (often choline) and a cyclic phosphate. This toxin acts on sphingomyelin (SM). It may also act on ceramide phosphoethanolamine (CPE), lysophosphatidylcholine (LPC) and lysophosphatidylethanolamine (LPE), but not on lysophosphatidylserine (LPS), and lysophosphatidylglycerol (LPG). It acts by transphosphatidylation, releasing exclusively cyclic phosphate products as second products. Induces dermonecrosis, hemolysis, increased vascular permeability, edema, inflammatory response, and platelet aggregation. This Sicarius terrosus (Cave spider) protein is Dermonecrotic toxin StSicTox-betaIF1.